The sequence spans 575 residues: Dihydroxy-acid dehydratase (575 aa).

The disordered stretch occupies residues 1–25 (MPTTDSARAADIKQPDIKPRSRDVT). Residues 8-25 (RAADIKQPDIKPRSRDVT) show a composition bias toward basic and acidic residues. A [2Fe-2S] cluster-binding site is contributed by Cys-64. Asp-96 contributes to the Mg(2+) binding site. Cys-137 is a [2Fe-2S] cluster binding site. Asp-138 and Lys-139 together coordinate Mg(2+). Lys-139 carries the N6-carboxylysine modification. Cys-214 is a binding site for [2Fe-2S] cluster. Glu-465 serves as a coordination point for Mg(2+). The active-site Proton acceptor is the Ser-491.

Belongs to the IlvD/Edd family. As to quaternary structure, homodimer. It depends on [2Fe-2S] cluster as a cofactor. Mg(2+) serves as cofactor.

It catalyses the reaction (2R)-2,3-dihydroxy-3-methylbutanoate = 3-methyl-2-oxobutanoate + H2O. The enzyme catalyses (2R,3R)-2,3-dihydroxy-3-methylpentanoate = (S)-3-methyl-2-oxopentanoate + H2O. Its pathway is amino-acid biosynthesis; L-isoleucine biosynthesis; L-isoleucine from 2-oxobutanoate: step 3/4. It participates in amino-acid biosynthesis; L-valine biosynthesis; L-valine from pyruvate: step 3/4. Its function is as follows. Functions in the biosynthesis of branched-chain amino acids. Catalyzes the dehydration of (2R,3R)-2,3-dihydroxy-3-methylpentanoate (2,3-dihydroxy-3-methylvalerate) into 2-oxo-3-methylpentanoate (2-oxo-3-methylvalerate) and of (2R)-2,3-dihydroxy-3-methylbutanoate (2,3-dihydroxyisovalerate) into 2-oxo-3-methylbutanoate (2-oxoisovalerate), the penultimate precursor to L-isoleucine and L-valine, respectively. This is Dihydroxy-acid dehydratase from Mycolicibacterium paratuberculosis (strain ATCC BAA-968 / K-10) (Mycobacterium paratuberculosis).